A 573-amino-acid chain; its full sequence is 3-(3-hydroxy-phenyl)propionate/3-hydroxycinnamic acid hydroxylase (573 aa).

Residues 18-47 (DVVI…IVEE) and 283-293 (FRKGRMFLAGD) contribute to the FAD site.

It belongs to the PheA/TfdB FAD monooxygenase family. It depends on FAD as a cofactor.

The catalysed reaction is 3-(3-hydroxyphenyl)propanoate + NADH + O2 + H(+) = 3-(2,3-dihydroxyphenyl)propanoate + NAD(+) + H2O. It carries out the reaction (2E)-3-(3-hydroxyphenyl)prop-2-enoate + NADH + O2 + H(+) = (2E)-3-(2,3-dihydroxyphenyl)prop-2-enoate + NAD(+) + H2O. Its pathway is aromatic compound metabolism; 3-phenylpropanoate degradation. Its function is as follows. Catalyzes the insertion of one atom of molecular oxygen into position 2 of the phenyl ring of 3-(3-hydroxyphenyl)propionate (3-HPP) and hydroxycinnamic acid (3HCI). This is 3-(3-hydroxy-phenyl)propionate/3-hydroxycinnamic acid hydroxylase from Mycobacterium sp. (strain KMS).